The following is a 171-amino-acid chain: L-methionine sulfoximine/L-methionine sulfone acetyltransferase (171 aa).

In terms of domain architecture, N-acetyltransferase spans 1 to 163; that stretch reads MTIRFADKAD…DLTFMQLQLD (163 aa). Substrate contacts are provided by residues 72–74 and 82–84; these read RSF and EHS. Residues 85 to 87, 93 to 98, Asn-124, and Ser-133 each bind acetyl-CoA; these read VYV and GKGLGR.

As to quaternary structure, homodimer.

It carries out the reaction L-methionine sulfoximine + acetyl-CoA = N-acetyl-L-methionine sulfoximine + CoA + H(+). The catalysed reaction is L-methionine sulfone + acetyl-CoA = N-acetyl-L-methionine sulfone + CoA + H(+). Its function is as follows. Plays a role in the resistance against the toxic effects of L-methionine sulfoximine (MSX), a rare amino acid which inhibits glutamine synthetase (GlnA). Catalyzes the acetylation of MSX. It can also use L-methionine sulfone (MSO). Also catalyzes the acylation of free L-amino acids using an acyl-CoA as acyl donor. This is L-methionine sulfoximine/L-methionine sulfone acetyltransferase (yncA) from Salmonella typhimurium (strain LT2 / SGSC1412 / ATCC 700720).